A 296-amino-acid chain; its full sequence is Aquaporin NIP1-1 (296 aa).

Met1 bears the N-acetylmethionine mark. 2 helical membrane passes run Leu57–Val77 and Val84–Ser104. Residues Asn114–Ala116 carry the NPA 1 motif. The next 3 membrane-spanning stretches (helical) occupy residues Val136–Leu156, Ala180–Thr200, and Ile205–Ala225. Positions Asn233–Gly235 match the NPA 2 motif. Residues Gly249–Asn269 traverse the membrane as a helical segment. At Ser286 the chain carries Phosphoserine.

This sequence belongs to the MIP/aquaporin (TC 1.A.8) family. NIP (TC 1.A.8.12) subfamily. As to expression, expressed in roots.

It is found in the membrane. Its function is as follows. Water channel probably required to promote glycerol permeability and water transport across cell membranes. This chain is Aquaporin NIP1-1 (NIP1-1), found in Arabidopsis thaliana (Mouse-ear cress).